The sequence spans 245 residues: Eukaryotic translation initiation factor 6 (245 aa).

Tyrosine 113 is modified (phosphotyrosine). Threonine 165 bears the Phosphothreonine mark. Serine 166 bears the Phosphoserine mark. Residues serine 174 and serine 175 each carry the phosphoserine; by CK1 modification. A Phosphoserine; by PKC modification is found at serine 235. Residues serine 239 and serine 243 each carry the phosphoserine modification.

It belongs to the eIF-6 family. In terms of assembly, monomer. Associates with the 60S ribosomal subunit. Interacts with RACK1. Interacts with DICER1, AGO2, TARBP2, MOV10 and RPL7A; they form a large RNA-induced silencing complex (RISC). In terms of processing, phosphorylation at Ser-174 and Ser-175 by CSNK1D/CK1 promotes nuclear export. Post-translationally, ufmylated by UFL1.

Its subcellular location is the cytoplasm. It localises to the nucleus. The protein localises to the nucleolus. In terms of biological role, binds to the 60S ribosomal subunit and prevents its association with the 40S ribosomal subunit to form the 80S initiation complex in the cytoplasm. Behaves as a stimulatory translation initiation factor downstream insulin/growth factors. Is also involved in ribosome biogenesis. Associates with pre-60S subunits in the nucleus and is involved in its nuclear export. Cytoplasmic release of TIF6 from 60S subunits and nuclear relocalization is promoted by a RACK1 (RACK1)-dependent protein kinase C activity. In tissues responsive to insulin, controls fatty acid synthesis and glycolysis by exerting translational control of adipogenic transcription factors such as CEBPB, CEBPD and ATF4 that have G/C rich or uORF in their 5'UTR. Required for ROS-dependent megakaryocyte maturation and platelets formation, controls the expression of mitochondrial respiratory chain genes involved in reactive oxygen species (ROS) synthesis. Involved in miRNA-mediated gene silencing by the RNA-induced silencing complex (RISC). Required for both miRNA-mediated translational repression and miRNA-mediated cleavage of complementary mRNAs by RISC. Modulates cell cycle progression and global translation of pre-B cells, its activation seems to be rate-limiting in tumorigenesis and tumor growth. This is Eukaryotic translation initiation factor 6 from Bos taurus (Bovine).